The following is a 251-amino-acid chain: Cell division protein ZapD (251 aa).

The protein belongs to the ZapD family. As to quaternary structure, interacts with FtsZ.

The protein localises to the cytoplasm. Cell division factor that enhances FtsZ-ring assembly. Directly interacts with FtsZ and promotes bundling of FtsZ protofilaments, with a reduction in FtsZ GTPase activity. This is Cell division protein ZapD from Paraburkholderia phytofirmans (strain DSM 17436 / LMG 22146 / PsJN) (Burkholderia phytofirmans).